Here is a 473-residue protein sequence, read N- to C-terminus: Ribulose bisphosphate carboxylase large chain (473 aa).

Substrate-binding residues include Asn-116 and Thr-166. Lys-168 (proton acceptor) is an active-site residue. Lys-170 contributes to the substrate binding site. Mg(2+) contacts are provided by Lys-194, Asp-196, and Glu-197. Position 194 is an N6-carboxylysine (Lys-194). His-287 functions as the Proton acceptor in the catalytic mechanism. Substrate-binding residues include Arg-288, His-320, and Ser-372.

It belongs to the RuBisCO large chain family. Type I subfamily. In terms of assembly, heterohexadecamer of 8 large chains and 8 small chains. Requires Mg(2+) as cofactor.

The catalysed reaction is 2 (2R)-3-phosphoglycerate + 2 H(+) = D-ribulose 1,5-bisphosphate + CO2 + H2O. It carries out the reaction D-ribulose 1,5-bisphosphate + O2 = 2-phosphoglycolate + (2R)-3-phosphoglycerate + 2 H(+). Functionally, ruBisCO catalyzes two reactions: the carboxylation of D-ribulose 1,5-bisphosphate, the primary event in carbon dioxide fixation, as well as the oxidative fragmentation of the pentose substrate. Both reactions occur simultaneously and in competition at the same active site. The sequence is that of Ribulose bisphosphate carboxylase large chain from Halorhodospira halophila (strain DSM 244 / SL1) (Ectothiorhodospira halophila (strain DSM 244 / SL1)).